The chain runs to 1694 residues: Immunoglobulin A1 protease autotransporter (1694 aa).

An N-terminal signal peptide occupies residues 1 to 25; sequence MLNKKFKLNFIALTVAYALTPYTEA. Positions 26-332 constitute a Peptidase S6 domain; that stretch reads ALVRDDVDYQ…NIYKPEFAKT (307 aa). Ser288 is a catalytic residue. Positions 991-1403 are disordered; that stretch reads VEKRNQTVDT…GSDRSTVALR (413 aa). Residues 997–1021 are compositionally biased toward polar residues; it reads TVDTTNITTPNNIQADVPSVPSNNE. Positions 1037-1047 are enriched in low complexity; the sequence is TPSETTETVAE. The span at 1049-1061 shows a compositional bias: basic and acidic residues; the sequence is SKQESKTVEKNEQ. Residues 1082-1095 show a composition bias toward polar residues; it reads KANTQTNEVAQSGS. Composition is skewed to basic and acidic residues over residues 1104-1124 and 1142-1154; these read EIKE…KDEI and APKE…KVEE. 2 stretches are compositionally biased toward polar residues: residues 1155–1178 and 1199–1210; these read TQVQ…SPNS and VSKNQTENTTDQ. The segment covering 1211 to 1226 has biased composition (basic and acidic residues); the sequence is PTEREKTAKVETEKTQ. Polar residues-rich tracts occupy residues 1227-1247, 1255-1297, and 1308-1336; these read EPPQ…TVQP, NVPT…TAIT, and TETA…NSES. The span at 1352-1370 shows a compositional bias: low complexity; sequence ETSAEETTAASTDETTIAD. A compositionally biased stretch (basic residues) spans 1374–1384; that stretch reads RSKPNRRSRRS. The Autotransporter domain maps to 1442-1694; the sequence is NNEGQYNVWV…TAELKLSFSF (253 aa).

It is found in the periplasm. The protein resides in the secreted. Its subcellular location is the cell surface. The protein localises to the cell outer membrane. It catalyses the reaction Cleavage of immunoglobulin A molecules at certain Pro-|-Xaa bonds in the hinge region. No small molecule substrates are known.. Its function is as follows. Virulence factor; cleaves host immunoglobulin A producing intact Fc and Fab fragments. In Haemophilus influenzae (strain ATCC 51907 / DSM 11121 / KW20 / Rd), this protein is Immunoglobulin A1 protease autotransporter (iga).